We begin with the raw amino-acid sequence, 419 residues long: Serine hydroxymethyltransferase (419 aa).

(6S)-5,6,7,8-tetrahydrofolate is bound by residues leucine 121 and 125–127; that span reads GHL. The residue at position 230 (lysine 230) is an N6-(pyridoxal phosphate)lysine. 355–357 lines the (6S)-5,6,7,8-tetrahydrofolate pocket; the sequence is SPF.

This sequence belongs to the SHMT family. In terms of assembly, homodimer. It depends on pyridoxal 5'-phosphate as a cofactor.

It localises to the cytoplasm. It carries out the reaction (6R)-5,10-methylene-5,6,7,8-tetrahydrofolate + glycine + H2O = (6S)-5,6,7,8-tetrahydrofolate + L-serine. Its pathway is one-carbon metabolism; tetrahydrofolate interconversion. It participates in amino-acid biosynthesis; glycine biosynthesis; glycine from L-serine: step 1/1. Its function is as follows. Catalyzes the reversible interconversion of serine and glycine with tetrahydrofolate (THF) serving as the one-carbon carrier. This reaction serves as the major source of one-carbon groups required for the biosynthesis of purines, thymidylate, methionine, and other important biomolecules. Also exhibits THF-independent aldolase activity toward beta-hydroxyamino acids, producing glycine and aldehydes, via a retro-aldol mechanism. This is Serine hydroxymethyltransferase from Alkalilimnicola ehrlichii (strain ATCC BAA-1101 / DSM 17681 / MLHE-1).